Here is a 367-residue protein sequence, read N- to C-terminus: 4-hydroxy-3-methylbut-2-en-1-yl diphosphate synthase (flavodoxin) (367 aa).

[4Fe-4S] cluster is bound by residues Cys-268, Cys-271, Cys-303, and Glu-310.

It belongs to the IspG family. It depends on [4Fe-4S] cluster as a cofactor.

The enzyme catalyses (2E)-4-hydroxy-3-methylbut-2-enyl diphosphate + oxidized [flavodoxin] + H2O + 2 H(+) = 2-C-methyl-D-erythritol 2,4-cyclic diphosphate + reduced [flavodoxin]. Its pathway is isoprenoid biosynthesis; isopentenyl diphosphate biosynthesis via DXP pathway; isopentenyl diphosphate from 1-deoxy-D-xylulose 5-phosphate: step 5/6. Its function is as follows. Converts 2C-methyl-D-erythritol 2,4-cyclodiphosphate (ME-2,4cPP) into 1-hydroxy-2-methyl-2-(E)-butenyl 4-diphosphate. This is 4-hydroxy-3-methylbut-2-en-1-yl diphosphate synthase (flavodoxin) from Halalkalibacterium halodurans (strain ATCC BAA-125 / DSM 18197 / FERM 7344 / JCM 9153 / C-125) (Bacillus halodurans).